The sequence spans 340 residues: Sodium/bile acid cotransporter 7 (340 aa).

Residues 1-10 (MRLLERVRKE) are Cytoplasmic-facing. A helical membrane pass occupies residues 11 to 31 (WFMVGIVVAIGAAKLEPSVGV). The Extracellular segment spans residues 32-37 (NGGPLK). Residues 38–58 (PEITVSYIAVATIFFNSGLSL) form a helical membrane-spanning segment. At 59–71 (KTEELTSALVHLK) the chain is on the cytoplasmic side. Residues 72–92 (LHLFIQVFTLAFFPTTIWLFL) traverse the membrane as a helical segment. The Extracellular segment spans residues 93 to 116 (QLLSVTSINEWLLKGLQTVGCMPP). Residues 117 to 137 (PVSSAVILTKAVGGNEAAAIF) form a helical membrane-spanning segment. A topological domain (cytoplasmic) is located at residue Asn138. The helical transmembrane segment at 139-159 (SAFGSFLGIVVTPVLLLLFLG) threads the bilayer. The Extracellular portion of the chain corresponds to 160 to 163 (SSSS). Residues 164–184 (VPFTSIFSQLFMTVVVPLVIG) traverse the membrane as a helical segment. Residues 185–201 (QIVRRYIKDWLERKKPP) lie on the Cytoplasmic side of the membrane. A helical transmembrane segment spans residues 202 to 222 (FGVVSSSVLLMIIYTTFCDTF). Residues 223 to 234 (SNPNIDLDKFSL) lie on the Extracellular side of the membrane. Residues 235 to 255 (ILILFIIVSIQLSFMLLTFVF) form a helical membrane-spanning segment. The Cytoplasmic portion of the chain corresponds to 256-270 (STRNNSGFTPADTVA). A helical membrane pass occupies residues 271–291 (IIFCSTHKSLTLGIPMLKIVF). The Extracellular portion of the chain corresponds to 292-298 (AGHEHLS). Residues 299–319 (LISLPLLIYHPAQILLGSVLV) form a helical membrane-spanning segment. The Cytoplasmic segment spans residues 320–340 (PTIKSWMVSRQKGVKLTRPTV).

The protein belongs to the bile acid:sodium symporter (BASS) (TC 2.A.28) family. In terms of tissue distribution, strongly expressed in liver, adrenal gland, small intestine and colon. Moderately expressed in heart, lung, kidney and spleen. Weakly expressed in brain.

It localises to the cell membrane. It is found in the endoplasmic reticulum membrane. The protein resides in the golgi apparatus membrane. In terms of biological role, involved in teeth and skeletal development. Has an essential role in the biosynthesis and trafficking of glycosaminoglycans and glycoproteins to produce a proper functioning extracellular matrix. Required for extracellular matrix mineralization. Also involved in the regulation of cellular calcium homeostasis. Does not show transport activity towards bile acids or steroid sulfates (including taurocholate, cholate, chenodeoxycholate, estrone-3-sulfate, dehydroepiandrosterone sulfate (DHEAS) and pregnenolone sulfate). This is Sodium/bile acid cotransporter 7 (Slc10a7) from Rattus norvegicus (Rat).